Here is a 1663-residue protein sequence, read N- to C-terminus: Kotanin synthase (1663 aa).

Residues 19 to 168 (RPHEFSFNTQ…PLPVYGGPCH (150 aa)) form an N-terminal acylcarrier protein transacylase domain (SAT) region. Positions 301 to 731 (DSRIAVVGMS…GGNTSLLLEE (431 aa)) constitute a Ketosynthase family 3 (KS3) domain. Residues cysteine 474, histidine 609, and histidine 650 each act as for beta-ketoacyl synthase activity in the active site. The interval 830 to 1149 (FIFSGQGSFY…SMCTLQETGV (320 aa)) is malonyl-CoA:ACP transacylase (MAT) domain. A product template (PT) domain region spans residues 1209 to 1527 (TALVHQIMEE…PRILMNRFFD (319 aa)). The interval 1213–1349 (HQIMEESFRP…GVVRCGDRQS (137 aa)) is N-terminal hotdog fold. The PKS/mFAS DH domain maps to 1213–1523 (HQIMEESFRP…LRPLPRILMN (311 aa)). The active-site Proton acceptor; for dehydratase activity is the histidine 1245. The interval 1376–1523 (QASRVSRDLV…LRPLPRILMN (148 aa)) is C-terminal hotdog fold. Aspartate 1434 functions as the Proton donor; for dehydratase activity in the catalytic mechanism. The segment at 1544–1580 (DLPQVQHQPSPTTDSGPDDDPKDPNTGPLTPEVDLPV) is disordered. The Carrier domain occupies 1586–1663 (KANTKLVRGA…ELKEYLTASW (78 aa)). Position 1623 is an O-(pantetheine 4'-phosphoryl)serine (serine 1623).

Requires pantetheine 4'-phosphate as cofactor.

It participates in secondary metabolite biosynthesis. In terms of biological role, non-reducing polyketide synthase; part of the gene cluster that mediates the biosynthesis of the bicoumarin kotanin. The non-reducing polyketide synthase ktnS first catalyzes the formation of the pentaketidic 4,7-dihydroxy-5-methylcoumarin from acetyl coenzyme A and 4 malonyl coenzyme A molecules. Further O-methylation by ktnB leads to the formation of 7-demethylsiderin. Then, an oxidative phenol coupling catalyzed by the cytochrome P450 monooxygenase ktnC forms the 8,8'-dimer P-orlandin via dimerization the monomeric precursor, 7-demethylsiderin. P-orlandin is subsequently O-methylated in a stepwise fashion to demethylkotanin and kotanin. This chain is Kotanin synthase, found in Aspergillus niger (strain ATCC MYA-4892 / CBS 513.88 / FGSC A1513).